A 653-amino-acid chain; its full sequence is Threonine--tRNA ligase (653 aa).

A TGS domain is found at 1 to 61 (MIKITFPDGN…NEDAEVKLFK (61 aa)). The interval 243–542 (DHRKIGKELE…LIEHTAGKFP (300 aa)) is catalytic. Residues cysteine 338, histidine 389, and histidine 519 each coordinate Zn(2+).

The protein belongs to the class-II aminoacyl-tRNA synthetase family. In terms of assembly, homodimer. Zn(2+) is required as a cofactor.

Its subcellular location is the cytoplasm. The enzyme catalyses tRNA(Thr) + L-threonine + ATP = L-threonyl-tRNA(Thr) + AMP + diphosphate + H(+). Its function is as follows. Catalyzes the attachment of threonine to tRNA(Thr) in a two-step reaction: L-threonine is first activated by ATP to form Thr-AMP and then transferred to the acceptor end of tRNA(Thr). Also edits incorrectly charged L-seryl-tRNA(Thr). The sequence is that of Threonine--tRNA ligase from Porphyromonas gingivalis (strain ATCC 33277 / DSM 20709 / CIP 103683 / JCM 12257 / NCTC 11834 / 2561).